A 162-amino-acid polypeptide reads, in one-letter code: NADH-quinone oxidoreductase subunit I (162 aa).

4Fe-4S ferredoxin-type domains lie at 54–83 and 93–122; these read RRYE…INST and SSYE…ETNI. Residues cysteine 63, cysteine 66, cysteine 69, cysteine 73, cysteine 102, cysteine 105, cysteine 108, and cysteine 112 each contribute to the [4Fe-4S] cluster site.

It belongs to the complex I 23 kDa subunit family. In terms of assembly, NDH-1 is composed of 14 different subunits. Subunits NuoA, H, J, K, L, M, N constitute the membrane sector of the complex. Requires [4Fe-4S] cluster as cofactor.

It localises to the cell inner membrane. It carries out the reaction a quinone + NADH + 5 H(+)(in) = a quinol + NAD(+) + 4 H(+)(out). NDH-1 shuttles electrons from NADH, via FMN and iron-sulfur (Fe-S) centers, to quinones in the respiratory chain. The immediate electron acceptor for the enzyme in this species is believed to be ubiquinone. Couples the redox reaction to proton translocation (for every two electrons transferred, four hydrogen ions are translocated across the cytoplasmic membrane), and thus conserves the redox energy in a proton gradient. The protein is NADH-quinone oxidoreductase subunit I of Francisella tularensis subsp. holarctica (strain FTNF002-00 / FTA).